The sequence spans 415 residues: MEGKAIATSLGGDRVLIFPCSPRSSFVFTSRLSSLPLKRASIGGAVSCSGVNGLTRWNSIVSTRRLVPVRSINSESDSDSDFPHENQQGNPGLGKFKEYQEWDSWTAKFSGGANIPFLMLQLPQIILNTQNLLAGNNTALSAVPWLGMLTGLLGNLSLLSYFAKKREKEAAVVQTLGVVSTHIVLAQLTMAEAMPIQYFVATSAVVTIGLIVNCLYYFGKLSKTVWQLWEDVITIGGLSVLPQIMWSTFVPLVPNSILPGTTAFGIAVAAIIMARTGKLSEKGVRFVGSLSGWTATLMFMWMPVSQMWTNFLNPDNIKGLSSITMLLSMMGNGLMIPRALFIRDLMWLTGSLWATLFYGYGNILCLYLVNCTSQSFFVAATIGLISWIGLALWRDAVAYGHNSPFRSLKELVFGP.

The tract at residues 74–93 (SESDSDSDFPHENQQGNPGL) is disordered. 9 consecutive transmembrane segments (helical) span residues 139 to 159 (ALSAVPWLGMLTGLLGNLSLL), 176 to 196 (LGVVSTHIVLAQLTMAEAMPI), 199 to 219 (FVATSAVVTIGLIVNCLYYFG), 231 to 251 (DVITIGGLSVLPQIMWSTFVP), 252 to 272 (LVPNSILPGTTAFGIAVAAII), 286 to 306 (FVGSLSGWTATLMFMWMPVSQ), 322 to 342 (SITMLLSMMGNGLMIPRALFI), 345 to 365 (LMWLTGSLWATLFYGYGNILC), and 373 to 393 (SQSFFVAATIGLISWIGLALW).

Expressed in leaves and roots. Expressed in root cap cells.

The protein localises to the plastid. It is found in the chloroplast inner membrane. Probable maltose transporter. Essential for the conversion of starch to sucrose in leaves at night, probably via the export of maltose from the chloroplast. Required for root cap cells formation. This is Maltose excess protein 1, chloroplastic (MEX1) from Arabidopsis thaliana (Mouse-ear cress).